A 797-amino-acid polypeptide reads, in one-letter code: MPCTTYLPLLLLLFLLPPPSVQSKVIIKGNQTILSFKAIFRLGFFSTTNGSSNWYLGISYASMPTPTHVWVANRIRPVSDPDSSTLELTSTGYLIVSNLRDGVVWQTDNKQPGTDFRFSETGNLILINDDGSPVWQSFDNPTDTWLPGMNVTGLTAMTSWRSLFDPSPGFYSLRLSPSFNEFQLVYKGTTPYWSTGNWTGEAFVGVPEMTIPYIYRFHFVNPYTPTASFWYIVPPLDSVSEPRLTRFMVGANGQLKQYTWDPQTQSWNMFWLQPEDPCRVYNLCGQLGFCSSELLKPCACIRGFRPRNDAAWRSDDYSDGCRRENGDSGEKSDTFEAVGDLRYDGDVKMSRLQVSKSSCAKTCLGNSSCVGFYHKEKSNLCKILLESPNNLKNSKGNISKSIIILCSVVGSISVLGFTLLVPLILLKRSRKRKKTRKQDEDGFAVLNLKVFSFKELQSATNGFSDKVGHGGFGAVFKGTLPGSSTFVAVKRLERPGSGESEFRAEVCTIGNIQHVNLVRLRGFCSENLHRLLVYDYMPQGSLSSYLSRTSPKLLSWETRFRIALGTAKGIAYLHEGCRDCIIHCDIKPENILLDSDYNAKVSDFGLAKLLGRDFSRVLATMRGTWGYVAPEWISGLPITTKADVYSFGMTLLELIGGRRNVIVNSDTLGEKETEPEKWFFPPWAAREIIQGNVDSVVDSRLNGEYNTEEVTRMATVAIWCIQDNEEIRPAMGTVVKMLEGVVEVTVPPPPKLIQALVSGDSYRGVSGTSCSEGHGCSDLNTGLSSPGSRSSFGRPSP.

Positions 1–23 (MPCTTYLPLLLLLFLLPPPSVQS) are cleaved as a signal peptide. The region spanning 24 to 139 (KVIIKGNQTI…DGSPVWQSFD (116 aa)) is the Bulb-type lectin domain. Over 24–401 (KVIIKGNQTI…KNSKGNISKS (378 aa)) the chain is Extracellular. N30, N49, N150, and N197 each carry an N-linked (GlcNAc...) asparagine glycan. The EGF-like; atypical domain occupies 274 to 310 (PEDPCRVYNLCGQLGFCSSELLKPCACIRGFRPRNDA). 4 disulfides stabilise this stretch: C278/C290, C284/C298, C359/C381, and C363/C369. A PAN domain is found at 321–407 (CRRENGDSGE…ISKSIIILCS (87 aa)). Residues N366 and N397 are each glycosylated (N-linked (GlcNAc...) asparagine). Residues 402 to 422 (IIILCSVVGSISVLGFTLLVP) form a helical membrane-spanning segment. Residues 423–797 (LILLKRSRKR…SRSSFGRPSP (375 aa)) lie on the Cytoplasmic side of the membrane. The Protein kinase domain maps to 461–742 (NGFSDKVGHG…TVVKMLEGVV (282 aa)). ATP is bound by residues 467–475 (VGHGGFGAV) and K490. The caM-binding stretch occupies residues 550 to 566 (SPKLLSWETRFRIALGT). Catalysis depends on D585, which acts as the Proton acceptor. Residues 767-797 (GTSCSEGHGCSDLNTGLSSPGSRSSFGRPSP) form a disordered region. A compositionally biased stretch (low complexity) spans 784 to 797 (SSPGSRSSFGRPSP).

This sequence belongs to the protein kinase superfamily. Ser/Thr protein kinase family. Autophosphorylated. In terms of tissue distribution, expressed in the shoot apex and roots, specifically in lateral roots and at the root-hypocotyl transition zone.

It is found in the cell membrane. The enzyme catalyses L-seryl-[protein] + ATP = O-phospho-L-seryl-[protein] + ADP + H(+). The catalysed reaction is L-threonyl-[protein] + ATP = O-phospho-L-threonyl-[protein] + ADP + H(+). Its function is as follows. Serine/threonine-protein kinase. This Arabidopsis thaliana (Mouse-ear cress) protein is G-type lectin S-receptor-like serine/threonine-protein kinase SD2-2 (SD22).